Reading from the N-terminus, the 20-residue chain is Apidaecin 3+ (20 aa).

The disordered stretch occupies residues 1 to 20 (GKPSRPRPAPIQPRPPHPRL).

The protein belongs to the apidaecin family.

It is found in the secreted. Functionally, antimicrobial peptide active against many Gram-negative enterobacterial and plant-associated bacterial species. Not active against other bacterial species like H.pylori, P.mirabilis, B.pertussis or N.gonorrhoeae. Its function is as follows. Among others, also active against S.typhi. Not active against S.typhi. This Pimpla disparis (Parasitic wasp) protein is Apidaecin 3+.